A 547-amino-acid polypeptide reads, in one-letter code: CTP synthase (547 aa).

An amidoligase domain region spans residues 1–265; it reads MARFIFITGG…DQAVLDAFGI (265 aa). S13 is a CTP binding site. S13 provides a ligand contact to UTP. ATP is bound by residues 14–19 and D71; that span reads SLGKGL. Residues D71 and E139 each coordinate Mg(2+). CTP is bound by residues 146–148, 186–191, and K222; these read DIE and KTKPTQ. Residues 186-191 and K222 each bind UTP; that span reads KTKPTQ. The 256-residue stretch at 291–546 folds into the Glutamine amidotransferase type-1 domain; the sequence is KVAIVGKYTQ…VRAAKENSRL (256 aa). Residue G353 participates in L-glutamine binding. Catalysis depends on C380, which acts as the Nucleophile; for glutamine hydrolysis. L-glutamine-binding positions include 381-384, E404, and R474; that span reads LGMQ. Residues H519 and E521 contribute to the active site.

It belongs to the CTP synthase family. In terms of assembly, homotetramer.

The enzyme catalyses UTP + L-glutamine + ATP + H2O = CTP + L-glutamate + ADP + phosphate + 2 H(+). It catalyses the reaction L-glutamine + H2O = L-glutamate + NH4(+). It carries out the reaction UTP + NH4(+) + ATP = CTP + ADP + phosphate + 2 H(+). It participates in pyrimidine metabolism; CTP biosynthesis via de novo pathway; CTP from UDP: step 2/2. Its activity is regulated as follows. Allosterically activated by GTP, when glutamine is the substrate; GTP has no effect on the reaction when ammonia is the substrate. The allosteric effector GTP functions by stabilizing the protein conformation that binds the tetrahedral intermediate(s) formed during glutamine hydrolysis. Inhibited by the product CTP, via allosteric rather than competitive inhibition. Functionally, catalyzes the ATP-dependent amination of UTP to CTP with either L-glutamine or ammonia as the source of nitrogen. Regulates intracellular CTP levels through interactions with the four ribonucleotide triphosphates. This is CTP synthase from Jannaschia sp. (strain CCS1).